A 292-amino-acid polypeptide reads, in one-letter code: Elongation factor Ts (292 aa).

Residues 80–83 (TDFV) form an involved in Mg(2+) ion dislocation from EF-Tu region.

It belongs to the EF-Ts family.

It is found in the cytoplasm. Associates with the EF-Tu.GDP complex and induces the exchange of GDP to GTP. It remains bound to the aminoacyl-tRNA.EF-Tu.GTP complex up to the GTP hydrolysis stage on the ribosome. This Cupriavidus necator (strain ATCC 17699 / DSM 428 / KCTC 22496 / NCIMB 10442 / H16 / Stanier 337) (Ralstonia eutropha) protein is Elongation factor Ts.